Here is a 100-residue protein sequence, read N- to C-terminus: Large ribosomal subunit protein uL23 (100 aa).

It belongs to the universal ribosomal protein uL23 family. As to quaternary structure, part of the 50S ribosomal subunit. Contacts protein L29, and trigger factor when it is bound to the ribosome.

One of the early assembly proteins it binds 23S rRNA. One of the proteins that surrounds the polypeptide exit tunnel on the outside of the ribosome. Forms the main docking site for trigger factor binding to the ribosome. This Photorhabdus laumondii subsp. laumondii (strain DSM 15139 / CIP 105565 / TT01) (Photorhabdus luminescens subsp. laumondii) protein is Large ribosomal subunit protein uL23.